Consider the following 204-residue polypeptide: High frequency lysogenization protein HflD homolog (204 aa).

This sequence belongs to the HflD family.

It is found in the cytoplasm. Its subcellular location is the cell inner membrane. This chain is High frequency lysogenization protein HflD homolog, found in Xanthomonas euvesicatoria pv. vesicatoria (strain 85-10) (Xanthomonas campestris pv. vesicatoria).